Consider the following 106-residue polypeptide: UPF0145 protein Tlet_1264 (106 aa).

The protein belongs to the UPF0145 family.

The protein is UPF0145 protein Tlet_1264 of Pseudothermotoga lettingae (strain ATCC BAA-301 / DSM 14385 / NBRC 107922 / TMO) (Thermotoga lettingae).